The following is a 746-amino-acid chain: Ribosome biogenesis protein BOP1 (746 aa).

The segment at Met1–Ala116 is disordered. Residues Ser43–Asp65 are compositionally biased toward low complexity. The segment covering Ser66 to Asp87 has biased composition (acidic residues). The segment covering Asp88 to Glu99 has biased composition (basic and acidic residues). Thr106 carries the phosphothreonine modification. The residue at position 122 (Tyr122) is a Phosphotyrosine. Phosphoserine is present on residues Ser126 and Ser127. The segment at Met265 to Trp427 is sufficient for nucleolar localization. 7 WD repeats span residues Gly411 to Thr450, Pro452 to Ala492, Cys532 to Arg576, Arg577 to Lys615, Pro618 to Arg657, His661 to Gln700, and Thr716 to Thr746.

This sequence belongs to the WD repeat BOP1/ERB1 family. As to quaternary structure, component of the PeBoW complex, composed of BOP1, PES1 and WDR12. The complex is held together by BOP1, which interacts with PES1 via its N-terminal domain and with WDR12 via a high-affinity interaction between the seven-bladed beta-propeller domains of the 2 proteins. The NOP7 complex associates with the 66S pre-ribosome. The PeBoW complex associates with DDX27, BOP1 interacts directly with DDX27.

Its subcellular location is the nucleus. The protein resides in the nucleolus. It is found in the nucleoplasm. Component of the PeBoW complex, which is required for maturation of 28S and 5.8S ribosomal RNAs and formation of the 60S ribosome. This Homo sapiens (Human) protein is Ribosome biogenesis protein BOP1.